A 469-amino-acid polypeptide reads, in one-letter code: ATP synthase subunit beta (469 aa).

155–162 (GGAGVGKT) contributes to the ATP binding site.

Belongs to the ATPase alpha/beta chains family. In terms of assembly, F-type ATPases have 2 components, CF(1) - the catalytic core - and CF(0) - the membrane proton channel. CF(1) has five subunits: alpha(3), beta(3), gamma(1), delta(1), epsilon(1). CF(0) has three main subunits: a(1), b(2) and c(9-12). The alpha and beta chains form an alternating ring which encloses part of the gamma chain. CF(1) is attached to CF(0) by a central stalk formed by the gamma and epsilon chains, while a peripheral stalk is formed by the delta and b chains.

It localises to the cell inner membrane. It carries out the reaction ATP + H2O + 4 H(+)(in) = ADP + phosphate + 5 H(+)(out). Its function is as follows. Produces ATP from ADP in the presence of a proton gradient across the membrane. The catalytic sites are hosted primarily by the beta subunits. This chain is ATP synthase subunit beta, found in Thermosipho melanesiensis (strain DSM 12029 / CIP 104789 / BI429).